We begin with the raw amino-acid sequence, 123 residues long: uncharacterized protein (123 aa).

Thr56 carries the post-translational modification Phosphothreonine. A phosphoserine mark is found at Ser73, Ser87, Ser97, Ser113, and Ser119.

As to expression, highly expressed in the kidney (at protein level).

The protein resides in the cytoplasm. This is an uncharacterized protein from Felis catus (Cat).